Reading from the N-terminus, the 491-residue chain is NADH-quinone oxidoreductase subunit N (491 aa).

The next 14 membrane-spanning stretches (helical) occupy residues 11–31 (ATAE…TTFA), 38–58 (LAYG…YNTA), 74–94 (LLGD…LLYG), 106–126 (PEYY…VTSN), 128–148 (LLSM…LVAF), 163–183 (FVLG…LYGA), 206–226 (LLFG…VVPF), 243–263 (LIIA…LLVW), 272–292 (WQTM…LAAI), 301–321 (LAYS…SGVV), 336–356 (MFYA…IILL), 379–399 (FAAM…FIGF), 410–430 (VAAG…IGAF), and 465–485 (LAIA…TFVL).

Belongs to the complex I subunit 2 family. NDH-1 is composed of 14 different subunits. Subunits NuoA, H, J, K, L, M, N constitute the membrane sector of the complex.

The protein resides in the cell inner membrane. It catalyses the reaction a quinone + NADH + 5 H(+)(in) = a quinol + NAD(+) + 4 H(+)(out). Functionally, NDH-1 shuttles electrons from NADH, via FMN and iron-sulfur (Fe-S) centers, to quinones in the respiratory chain. The immediate electron acceptor for the enzyme in this species is believed to be ubiquinone. Couples the redox reaction to proton translocation (for every two electrons transferred, four hydrogen ions are translocated across the cytoplasmic membrane), and thus conserves the redox energy in a proton gradient. This Azoarcus sp. (strain BH72) protein is NADH-quinone oxidoreductase subunit N.